A 325-amino-acid chain; its full sequence is Anthranilate phosphoribosyltransferase (325 aa).

Residues G73, 76 to 77 (GD), T81, 83 to 86 (NIST), 100 to 108 (KHGNVSITS), and S112 contribute to the 5-phospho-alpha-D-ribose 1-diphosphate site. G73 contributes to the anthranilate binding site. Mg(2+) is bound at residue S85. N103 contacts anthranilate. R158 serves as a coordination point for anthranilate. Mg(2+)-binding residues include D216 and E217.

The protein belongs to the anthranilate phosphoribosyltransferase family. In terms of assembly, homodimer. It depends on Mg(2+) as a cofactor.

The catalysed reaction is N-(5-phospho-beta-D-ribosyl)anthranilate + diphosphate = 5-phospho-alpha-D-ribose 1-diphosphate + anthranilate. The protein operates within amino-acid biosynthesis; L-tryptophan biosynthesis; L-tryptophan from chorismate: step 2/5. In terms of biological role, catalyzes the transfer of the phosphoribosyl group of 5-phosphorylribose-1-pyrophosphate (PRPP) to anthranilate to yield N-(5'-phosphoribosyl)-anthranilate (PRA). This is Anthranilate phosphoribosyltransferase from Methanococcus aeolicus (strain ATCC BAA-1280 / DSM 17508 / OCM 812 / Nankai-3).